Reading from the N-terminus, the 329-residue chain is 4-hydroxythreonine-4-phosphate dehydrogenase (329 aa).

Substrate contacts are provided by histidine 136 and threonine 137. The a divalent metal cation site is built by histidine 166, histidine 211, and histidine 266. Positions 274, 283, and 292 each coordinate substrate.

This sequence belongs to the PdxA family. As to quaternary structure, homodimer. Requires Zn(2+) as cofactor. Mg(2+) serves as cofactor. It depends on Co(2+) as a cofactor.

It localises to the cytoplasm. The enzyme catalyses 4-(phosphooxy)-L-threonine + NAD(+) = 3-amino-2-oxopropyl phosphate + CO2 + NADH. It functions in the pathway cofactor biosynthesis; pyridoxine 5'-phosphate biosynthesis; pyridoxine 5'-phosphate from D-erythrose 4-phosphate: step 4/5. In terms of biological role, catalyzes the NAD(P)-dependent oxidation of 4-(phosphooxy)-L-threonine (HTP) into 2-amino-3-oxo-4-(phosphooxy)butyric acid which spontaneously decarboxylates to form 3-amino-2-oxopropyl phosphate (AHAP). This chain is 4-hydroxythreonine-4-phosphate dehydrogenase, found in Shigella sonnei (strain Ss046).